The chain runs to 361 residues: Mitochondrial import receptor subunit TOM40 homolog (361 aa).

Positions 1–10 (MGNVLAASSP) are enriched in low complexity. A disordered region spans residues 1-71 (MGNVLAASSP…TASASGAAED (71 aa)). The span at 11 to 36 (PAGPPPPPAPALVGLPPPPPSPPGFT) shows a compositional bias: pro residues. Low complexity-rich tracts occupy residues 37 to 52 (LPPLGGSLGAGTSTSR) and 59 to 71 (GAATASASGAAED).

It belongs to the Tom40 family. Forms part of the preprotein translocase complex of the outer mitochondrial membrane (TOM complex) which consists of at least 7 different proteins (TOMM5, TOMM6, TOMM7, TOMM20, TOMM22, TOMM40 and TOMM70). Interacts with mitochondrial targeting sequences. Interacts with TIMM29; linking the TIM22 complex to the TOM complex. Forms a complex with BCAP31 (via C-terminus) which mediates the translocation of components of the mitochondrial membrane respiratory chain NADH dehydrogenase (Complex I) from the cytosol to the mitochondria. Interacts (via N-terminus) with CYP1A1 (via mitochondrial targeting signal); this interaction is required for CYP1A1 translocation across the mitochondrial outer membrane.

Its subcellular location is the mitochondrion outer membrane. In terms of biological role, channel-forming protein essential for import of protein precursors into mitochondria. Plays a role in the assembly of the mitochondrial membrane respiratory chain NADH dehydrogenase (Complex I) by forming a complex with BCAP31 and mediating the translocation of Complex I components from the cytosol to the mitochondria. This Homo sapiens (Human) protein is Mitochondrial import receptor subunit TOM40 homolog (TOMM40).